The chain runs to 447 residues: Na(+)-translocating NADH-quinone reductase subunit A (447 aa).

It belongs to the NqrA family. Composed of six subunits; NqrA, NqrB, NqrC, NqrD, NqrE and NqrF.

The enzyme catalyses a ubiquinone + n Na(+)(in) + NADH + H(+) = a ubiquinol + n Na(+)(out) + NAD(+). Its function is as follows. NQR complex catalyzes the reduction of ubiquinone-1 to ubiquinol by two successive reactions, coupled with the transport of Na(+) ions from the cytoplasm to the periplasm. NqrA to NqrE are probably involved in the second step, the conversion of ubisemiquinone to ubiquinol. The protein is Na(+)-translocating NADH-quinone reductase subunit A of Haemophilus influenzae (strain ATCC 51907 / DSM 11121 / KW20 / Rd).